The chain runs to 213 residues: MRLRNKPWAADLIAENPDMILVSPENIASNWQSRFAKEQPIYIEVGSGKGQFITQMAQKYPDRNFIAVEIQESAIAVILQKQVELKLPNLQLLLGNGAALTTFFAENEVAGVYLNFSDPWPKTRHEKRRLTYKSFLAEYQQIMQPTGYLRFKTDNQGLFEYSLASLNAYGMVFDDISLDLHNSDLAEDNIQTEYEEKFSKRGQVIYRLEAHYK.

Residues Glu-44, Glu-69, Asn-96, and Asp-118 each contribute to the S-adenosyl-L-methionine site. Asp-118 is a catalytic residue. Lys-122 is a binding site for substrate. The interaction with RNA stretch occupies residues 124 to 129 (RHEKRR). Residues Asp-154 and 192–195 (TEYE) each bind substrate.

Belongs to the class I-like SAM-binding methyltransferase superfamily. TrmB family.

The enzyme catalyses guanosine(46) in tRNA + S-adenosyl-L-methionine = N(7)-methylguanosine(46) in tRNA + S-adenosyl-L-homocysteine. Its pathway is tRNA modification; N(7)-methylguanine-tRNA biosynthesis. In terms of biological role, catalyzes the formation of N(7)-methylguanine at position 46 (m7G46) in tRNA. The sequence is that of tRNA (guanine-N(7)-)-methyltransferase from Latilactobacillus sakei subsp. sakei (strain 23K) (Lactobacillus sakei subsp. sakei).